Reading from the N-terminus, the 261-residue chain is Carbonic anhydrase 1 (261 aa).

Ala2 is modified (N-acetylalanine). An Alpha-carbonic anhydrase domain is found at 4-261 (ADWGYGSENG…LKGRTVRASF (258 aa)). The active-site Proton donor/acceptor is the His65. Residues His95, His97, and His120 each coordinate Zn(2+). Substrate contacts are provided by residues Thr200 and 200 to 201 (TH). The segment at 239–261 (AVPVLSNHRPPQPLKGRTVRASF) is disordered.

The protein belongs to the alpha-carbonic anhydrase family. Requires Zn(2+) as cofactor.

The protein localises to the cytoplasm. The catalysed reaction is hydrogencarbonate + H(+) = CO2 + H2O. The enzyme catalyses urea = cyanamide + H2O. Its activity is regulated as follows. Inhibited by acetazolamide. In terms of biological role, catalyzes the reversible hydration of carbon dioxide. Can hydrate cyanamide to urea. This is Carbonic anhydrase 1 (Ca1) from Mus musculus (Mouse).